Consider the following 136-residue polypeptide: Large ribosomal subunit protein uL16 (136 aa).

The protein belongs to the universal ribosomal protein uL16 family. As to quaternary structure, part of the 50S ribosomal subunit.

Binds 23S rRNA and is also seen to make contacts with the A and possibly P site tRNAs. This chain is Large ribosomal subunit protein uL16, found in Shewanella woodyi (strain ATCC 51908 / MS32).